Reading from the N-terminus, the 512-residue chain is Maturase K (512 aa).

The protein belongs to the intron maturase 2 family. MatK subfamily.

It localises to the plastid. It is found in the chloroplast. In terms of biological role, usually encoded in the trnK tRNA gene intron. Probably assists in splicing its own and other chloroplast group II introns. The protein is Maturase K of Platanus occidentalis (Sycamore).